The sequence spans 151 residues: Large-conductance mechanosensitive channel (151 aa).

2 helical membrane-spanning segments follow: residues 14 to 34 and 85 to 105; these read VVDM…VNSL and GLFV…FLLV.

It belongs to the MscL family. In terms of assembly, homopentamer.

It localises to the cell inner membrane. Functionally, channel that opens in response to stretch forces in the membrane lipid bilayer. May participate in the regulation of osmotic pressure changes within the cell. This is Large-conductance mechanosensitive channel from Chlorobaculum tepidum (strain ATCC 49652 / DSM 12025 / NBRC 103806 / TLS) (Chlorobium tepidum).